The following is a 635-amino-acid chain: DNA mismatch repair protein MutL (635 aa).

The segment at 359–399 (GTNKYAQPEAAKSSAAEQAVARERSSARERAAPAYKEDHPY) is disordered. Residues 364–377 (AQPEAAKSSAAEQA) are compositionally biased toward low complexity. A compositionally biased stretch (basic and acidic residues) spans 378–399 (VARERSSARERAAPAYKEDHPY).

The protein belongs to the DNA mismatch repair MutL/HexB family.

This protein is involved in the repair of mismatches in DNA. It is required for dam-dependent methyl-directed DNA mismatch repair. May act as a 'molecular matchmaker', a protein that promotes the formation of a stable complex between two or more DNA-binding proteins in an ATP-dependent manner without itself being part of a final effector complex. The chain is DNA mismatch repair protein MutL from Yersinia pseudotuberculosis serotype O:1b (strain IP 31758).